A 671-amino-acid chain; its full sequence is cGMP-dependent protein kinase 1 (671 aa).

S2 is modified (N-acetylserine). Positions 2–59 (SELEEDFAKILMLKEERIKELEKRLSEKEEEIQELKRKLHKCQSVLPVPSTHIGPRTT) form a coiled coil. Residues 2–102 (SELEEDFAKI…LIKEAILDND (101 aa)) are required for dimerization. The segment at 9-44 (AKILMLKEERIKELEKRLSEKEEEIQELKRKLHKCQ) is leucine-zipper. The autoinhibitory domain stretch occupies residues 50-75 (PSTHIGPRTTRAQGISAEPQTYRSFH). At T59 the chain carries Phosphothreonine; by autocatalysis. The cGMP-binding, high affinity stretch occupies residues 103–220 (FMKNLELSQI…EYMEFLKSVP (118 aa)). 3',5'-cyclic GMP contacts are provided by residues 167 to 170 (GELA), 177 to 178 (RT), R282, 291 to 294 (GEKA), 301 to 302 (RT), and Y336. The tract at residues 221–341 (TFQSLPEEIL…SNKAYEDAEA (121 aa)) is cGMP-binding, low affinity. Positions 360 to 619 (FNIIDTLGVG…VKDIQKHKWF (260 aa)) constitute a Protein kinase domain. ATP is bound by residues 366–374 (LGVGGFGRV) and K390. D484 functions as the Proton acceptor in the catalytic mechanism. T515 carries the post-translational modification Phosphothreonine. One can recognise an AGC-kinase C-terminal domain in the interval 620 to 671 (EGFNWEGLRKGTLTPPIIPSVASPTDTSNFDGFPEDNDEPPPDDNSGWDIDF). The interval 635–671 (PIIPSVASPTDTSNFDGFPEDNDEPPPDDNSGWDIDF) is disordered. Residues 652–661 (FPEDNDEPPP) are compositionally biased toward acidic residues.

It belongs to the protein kinase superfamily. AGC Ser/Thr protein kinase family. cGMP subfamily. Isoform alpha: parallel homodimer or heterodimer and also heterotetramer. Interacts directly with PPP1R12A. Non-covalent dimer of dimer of PRKG1-PRKG1 and PPP1R12A-PPP1R12A. This interaction targets PRKG1 to stress fibers to mediate smooth muscle cell relaxation and vasodilation in responses to rises in cGMP. Isoform beta: antiparallel homodimer. Part of cGMP kinase signaling complex at least composed of ACTA2/alpha-actin, CNN1/calponin H1, PLN/phospholamban, PRKG1 and ITPR1. Interacts with IRAG1. Forms a stable complex with ITPR1, IRAG1, and isoform beta of PRKG1. Interacts with TRPC7 (via ankyrin repeat domain). Isoform alpha interacts with RGS2. Interacts with GTF2I. In terms of processing, autophosphorylation increases kinase activity. Post-translationally, 65 kDa monomer is produced by proteolytic cleavage.

It localises to the cytoplasm. The enzyme catalyses L-seryl-[protein] + ATP = O-phospho-L-seryl-[protein] + ADP + H(+). It carries out the reaction L-threonyl-[protein] + ATP = O-phospho-L-threonyl-[protein] + ADP + H(+). In the absence of cGMP, PRKG1 activity is suppressed by autoinhibitory contacts. In terms of biological role, serine/threonine protein kinase that acts as a key mediator of the nitric oxide (NO)/cGMP signaling pathway. GMP binding activates PRKG1, which phosphorylates serines and threonines on many cellular proteins. Numerous protein targets for PRKG1 phosphorylation are implicated in modulating cellular calcium, but the contribution of each of these targets may vary substantially among cell types. Proteins that are phosphorylated by PRKG1 regulate platelet activation and adhesion, smooth muscle contraction, cardiac function, gene expression, feedback of the NO-signaling pathway, and other processes involved in several aspects of the CNS like axon guidance, hippocampal and cerebellar learning, circadian rhythm and nociception. Smooth muscle relaxation is mediated through lowering of intracellular free calcium, by desensitization of contractile proteins to calcium, and by decrease in the contractile state of smooth muscle or in platelet activation. Regulates intracellular calcium levels via several pathways: phosphorylates IRAG1 and inhibits IP3-induced Ca(2+) release from intracellular stores, phosphorylation of KCNMA1 (BKCa) channels decreases intracellular Ca(2+) levels, which leads to increased opening of this channel. PRKG1 phosphorylates the canonical transient receptor potential channel (TRPC) family which inactivates the associated inward calcium current. Another mode of action of NO/cGMP/PKGI signaling involves PKGI-mediated inactivation of the Ras homolog gene family member A (RhoA). Phosphorylation of RHOA by PRKG1 blocks the action of this protein in myriad processes: regulation of RHOA translocation; decreasing contraction; controlling vesicle trafficking, reduction of myosin light chain phosphorylation resulting in vasorelaxation. Activation of PRKG1 by NO signaling also alters gene expression in a number of tissues. In smooth muscle cells, increased cGMP and PRKG1 activity influence expression of smooth muscle-specific contractile proteins, levels of proteins in the NO/cGMP signaling pathway, down-regulation of the matrix proteins osteopontin and thrombospondin-1 to limit smooth muscle cell migration and phenotype. Regulates vasodilator-stimulated phosphoprotein (VASP) functions in platelets and smooth muscle. This is cGMP-dependent protein kinase 1 (PRKG1) from Oryctolagus cuniculus (Rabbit).